Reading from the N-terminus, the 201-residue chain is Recombination protein RecR (201 aa).

The C4-type zinc finger occupies Cys-60–Cys-75. Positions Ala-83–Pro-178 constitute a Toprim domain.

This sequence belongs to the RecR family.

Functionally, may play a role in DNA repair. It seems to be involved in an RecBC-independent recombinational process of DNA repair. It may act with RecF and RecO. The chain is Recombination protein RecR from Chelativorans sp. (strain BNC1).